We begin with the raw amino-acid sequence, 188 residues long: Translation machinery-associated protein 22 (188 aa).

An SUI1 domain is found at 96-167; the sequence is VTIKRIERNK…EIEEFLLEKY (72 aa).

Belongs to the DENR family. As to quaternary structure, interacts with the 40S ribosomal subunit.

The protein localises to the cytoplasm. The protein is Translation machinery-associated protein 22 (TMA22) of Chaetomium globosum (strain ATCC 6205 / CBS 148.51 / DSM 1962 / NBRC 6347 / NRRL 1970) (Soil fungus).